We begin with the raw amino-acid sequence, 329 residues long: NAD kinase (329 aa).

Positions Met-1 to Gly-26 are disordered. Asp-104 functions as the Proton acceptor in the catalytic mechanism. Residues Asp-104–Gly-105, Arg-109, Asn-179–Glu-180, Asp-209, and Thr-220–Ser-225 each bind NAD(+).

It belongs to the NAD kinase family. The cofactor is a divalent metal cation.

The protein resides in the cytoplasm. It carries out the reaction NAD(+) + ATP = ADP + NADP(+) + H(+). Its function is as follows. Involved in the regulation of the intracellular balance of NAD and NADP, and is a key enzyme in the biosynthesis of NADP. Catalyzes specifically the phosphorylation on 2'-hydroxyl of the adenosine moiety of NAD to yield NADP. In Corynebacterium jeikeium (strain K411), this protein is NAD kinase.